The primary structure comprises 85 residues: Large ribosomal subunit protein bL31B (85 aa).

The protein belongs to the bacterial ribosomal protein bL31 family. Type B subfamily. In terms of assembly, part of the 50S ribosomal subunit.

The polypeptide is Large ribosomal subunit protein bL31B (Kocuria rhizophila (strain ATCC 9341 / DSM 348 / NBRC 103217 / DC2201)).